Consider the following 545-residue polypeptide: Calcium-dependent protein kinase 6 (545 aa).

A lipid anchor (N-myristoyl glycine) is attached at Gly2. The span at 34 to 43 shows a compositional bias: low complexity; sequence CSSTSTATSS. The disordered stretch occupies residues 34-58; that stretch reads CSSTSTATSSGGRMPIRSHQQRLSS. Positions 74–332 constitute a Protein kinase domain; that stretch reads YTVGRKLGQG…AHQVLCHPWV (259 aa). Residues 80 to 88 and Lys103 each bind ATP; that span reads LGQGQFGTT. Asp198 (proton acceptor) is an active-site residue. Positions 338–368 are autoinhibitory domain; it reads APDRPLAPAVLSRLKQFSAMNRLKKMALRVI. EF-hand domains lie at 375-410, 411-446, 447-482, and 486-516; these read EELA…YGSN, LREA…LNKL, EREE…HNMA, and IDDI…GAID. Positions 388, 390, 392, 399, 424, 426, 428, 430, 435, 460, 462, 464, 466, 471, 494, 496, 498, 500, and 505 each coordinate Ca(2+). The disordered stretch occupies residues 526–545; sequence GRPTTATSDDPSPTISSSSR. Residues 528–545 are compositionally biased toward low complexity; that stretch reads PTTATSDDPSPTISSSSR.

Belongs to the protein kinase superfamily. Ser/Thr protein kinase family. CDPK subfamily.

It localises to the membrane. The catalysed reaction is L-seryl-[protein] + ATP = O-phospho-L-seryl-[protein] + ADP + H(+). It carries out the reaction L-threonyl-[protein] + ATP = O-phospho-L-threonyl-[protein] + ADP + H(+). Activated by calcium. Autophosphorylation may play an important role in the regulation of the kinase activity. In terms of biological role, may play a role in signal transduction pathways that involve calcium as a second messenger. The chain is Calcium-dependent protein kinase 6 from Oryza sativa subsp. japonica (Rice).